The primary structure comprises 100 residues: Trp operon repressor homolog (100 aa).

Residues 59–82 mediate DNA binding; that stretch reads QRQISQMLGVGIATITRGSNELKS. Residues 78–93 show a composition bias toward basic and acidic residues; it reads NELKSKSDTDKDKLKT. The segment at 78–100 is disordered; it reads NELKSKSDTDKDKLKTLLEQGAQ.

The protein belongs to the TrpR family. In terms of assembly, homodimer.

Its subcellular location is the cytoplasm. This protein is an aporepressor. When complexed with L-tryptophan it binds the operator region of the trp operon and prevents the initiation of transcription. This chain is Trp operon repressor homolog, found in Vibrio campbellii (strain ATCC BAA-1116).